We begin with the raw amino-acid sequence, 393 residues long: NAD(P)H-quinone oxidoreductase subunit H, chloroplastic (393 aa).

This sequence belongs to the complex I 49 kDa subunit family. In terms of assembly, NDH is composed of at least 16 different subunits, 5 of which are encoded in the nucleus.

It localises to the plastid. Its subcellular location is the chloroplast thylakoid membrane. It catalyses the reaction a plastoquinone + NADH + (n+1) H(+)(in) = a plastoquinol + NAD(+) + n H(+)(out). The enzyme catalyses a plastoquinone + NADPH + (n+1) H(+)(in) = a plastoquinol + NADP(+) + n H(+)(out). Functionally, NDH shuttles electrons from NAD(P)H:plastoquinone, via FMN and iron-sulfur (Fe-S) centers, to quinones in the photosynthetic chain and possibly in a chloroplast respiratory chain. The immediate electron acceptor for the enzyme in this species is believed to be plastoquinone. Couples the redox reaction to proton translocation, and thus conserves the redox energy in a proton gradient. The chain is NAD(P)H-quinone oxidoreductase subunit H, chloroplastic from Liriodendron tulipifera (Tuliptree).